Reading from the N-terminus, the 361-residue chain is MTVPHIPRGPVMADIAAFRLTEEEKQRLLDPAIGGIILFRRNFQNIEQLKTLTAEIKALRTPELIIAVDHEGGRVQRFIEGFTRLPAMNVLGQIWDKDGASAAETAAGQVGRVLATELSACGIDLSFTPVLDLDWGNCAVIGNRSFHRNPEAVARLALALQKGLAKGGMKSCGKHFPGHGFVEGDSHLVLPEDGRSLDELEAADLAPFRIMSREGMAAVMPAHVVYPQVDTKPAGFSEIWLKQILRRDIGFKGVIFSDDLTMEGACGAGGIKERARISFEAGCDIVLVCNRPDLVDELRDGFTIPDNQDLAGRWQYMENSLGHEAVQAVMQTMGFQAAQAFVAGLASPQDTAGGVKVGEAF.

Substrate-binding positions include aspartate 69, arginine 77, arginine 144, and 174-175 (KH). The active-site Proton donor/acceptor is histidine 187. Aspartate 258 serves as the catalytic Nucleophile.

It belongs to the glycosyl hydrolase 3 family. NagZ subfamily.

It is found in the cytoplasm. It carries out the reaction Hydrolysis of terminal non-reducing N-acetyl-D-hexosamine residues in N-acetyl-beta-D-hexosaminides.. Its pathway is cell wall biogenesis; peptidoglycan recycling. Its function is as follows. Plays a role in peptidoglycan recycling by cleaving the terminal beta-1,4-linked N-acetylglucosamine (GlcNAc) from peptide-linked peptidoglycan fragments, giving rise to free GlcNAc, anhydro-N-acetylmuramic acid and anhydro-N-acetylmuramic acid-linked peptides. This Neisseria gonorrhoeae (strain ATCC 700825 / FA 1090) protein is Beta-hexosaminidase.